The following is a 381-amino-acid chain: Queuine tRNA-ribosyltransferase (381 aa).

The Proton acceptor role is filled by Asp96. Substrate is bound by residues Asp96–Phe100, Asp150, Gln193, and Gly220. The tract at residues Gly251 to Ser257 is RNA binding. Residue Asp270 is the Nucleophile of the active site. The segment at Thr275–Arg279 is RNA binding; important for wobble base 34 recognition. Residues Cys308, Cys310, Cys313, and His339 each coordinate Zn(2+).

The protein belongs to the queuine tRNA-ribosyltransferase family. As to quaternary structure, homodimer. Within each dimer, one monomer is responsible for RNA recognition and catalysis, while the other monomer binds to the replacement base PreQ1. Requires Zn(2+) as cofactor.

The enzyme catalyses 7-aminomethyl-7-carbaguanine + guanosine(34) in tRNA = 7-aminomethyl-7-carbaguanosine(34) in tRNA + guanine. The protein operates within tRNA modification; tRNA-queuosine biosynthesis. In terms of biological role, catalyzes the base-exchange of a guanine (G) residue with the queuine precursor 7-aminomethyl-7-deazaguanine (PreQ1) at position 34 (anticodon wobble position) in tRNAs with GU(N) anticodons (tRNA-Asp, -Asn, -His and -Tyr). Catalysis occurs through a double-displacement mechanism. The nucleophile active site attacks the C1' of nucleotide 34 to detach the guanine base from the RNA, forming a covalent enzyme-RNA intermediate. The proton acceptor active site deprotonates the incoming PreQ1, allowing a nucleophilic attack on the C1' of the ribose to form the product. After dissociation, two additional enzymatic reactions on the tRNA convert PreQ1 to queuine (Q), resulting in the hypermodified nucleoside queuosine (7-(((4,5-cis-dihydroxy-2-cyclopenten-1-yl)amino)methyl)-7-deazaguanosine). The polypeptide is Queuine tRNA-ribosyltransferase (Lysinibacillus sphaericus (strain C3-41)).